A 156-amino-acid chain; its full sequence is D-aminoacyl-tRNA deacylase (156 aa).

The Gly-cisPro motif, important for rejection of L-amino acids signature appears at 137 to 138 (GP).

Belongs to the DTD family. Homodimer.

It is found in the cytoplasm. It catalyses the reaction glycyl-tRNA(Ala) + H2O = tRNA(Ala) + glycine + H(+). It carries out the reaction a D-aminoacyl-tRNA + H2O = a tRNA + a D-alpha-amino acid + H(+). An aminoacyl-tRNA editing enzyme that deacylates mischarged D-aminoacyl-tRNAs. Also deacylates mischarged glycyl-tRNA(Ala), protecting cells against glycine mischarging by AlaRS. Acts via tRNA-based rather than protein-based catalysis; rejects L-amino acids rather than detecting D-amino acids in the active site. By recycling D-aminoacyl-tRNA to D-amino acids and free tRNA molecules, this enzyme counteracts the toxicity associated with the formation of D-aminoacyl-tRNA entities in vivo and helps enforce protein L-homochirality. This chain is D-aminoacyl-tRNA deacylase, found in Dictyoglomus turgidum (strain DSM 6724 / Z-1310).